A 166-amino-acid chain; its full sequence is Small ribosomal subunit protein uS5 (166 aa).

Residues 12 to 75 (YIEKLVQVNR…EAARRNMIQV (64 aa)) form the S5 DRBM domain.

Belongs to the universal ribosomal protein uS5 family. In terms of assembly, part of the 30S ribosomal subunit. Contacts proteins S4 and S8.

Its function is as follows. With S4 and S12 plays an important role in translational accuracy. Functionally, located at the back of the 30S subunit body where it stabilizes the conformation of the head with respect to the body. This Azotobacter vinelandii (strain DJ / ATCC BAA-1303) protein is Small ribosomal subunit protein uS5.